The sequence spans 134 residues: MSDKASTPKKSATKDATKPKKVGDEEAKKREVKKNFDSYALYISRVLKSVFPDIGITLPSISVMDSFVRDIFERIAMDASSLTRNYQKSTLTTKEIETATKLILKGDLNKHAVSEGQSAVKRAQGQPTSGSKSR.

Over residues 1-10 (MSDKASTPKK) the composition is skewed to polar residues. Disordered regions lie at residues 1 to 29 (MSDK…EAKK) and 113 to 134 (VSEG…SKSR). Basic and acidic residues predominate over residues 12–29 (ATKDATKPKKVGDEEAKK). Over residues 125–134 (GQPTSGSKSR) the composition is skewed to polar residues.

The protein belongs to the histone H2B family. The nucleosome is a histone octamer containing two molecules each of H2A, H2B, H3 and H4 assembled in one H3-H4 heterotetramer and two H2A-H2B heterodimers. The octamer wraps approximately 147 bp of DNA.

The protein resides in the nucleus. It is found in the chromosome. Its function is as follows. Core component of nucleosome. Nucleosomes wrap and compact DNA into chromatin, limiting DNA accessibility to the cellular machineries which require DNA as a template. Histones thereby play a central role in transcription regulation, DNA repair, DNA replication and chromosomal stability. DNA accessibility is regulated via a complex set of post-translational modifications of histones, also called histone code, and nucleosome remodeling. This is Histone H2B from Entamoeba invadens.